A 520-amino-acid polypeptide reads, in one-letter code: Probable protein phosphatase 2C 39 (520 aa).

Positions 160–507 (FLTSTEIKMA…DDVTIIVIIL (348 aa)) constitute a PPM-type phosphatase domain. 4 residues coordinate Mn(2+): aspartate 195, glycine 196, aspartate 435, and aspartate 498.

Belongs to the PP2C family. Mg(2+) serves as cofactor. The cofactor is Mn(2+).

The catalysed reaction is O-phospho-L-seryl-[protein] + H2O = L-seryl-[protein] + phosphate. It catalyses the reaction O-phospho-L-threonyl-[protein] + H2O = L-threonyl-[protein] + phosphate. This chain is Probable protein phosphatase 2C 39, found in Oryza sativa subsp. japonica (Rice).